The primary structure comprises 393 residues: NAD(P)H-quinone oxidoreductase subunit H, chloroplastic (393 aa).

The protein belongs to the complex I 49 kDa subunit family. NDH is composed of at least 16 different subunits, 5 of which are encoded in the nucleus.

It is found in the plastid. The protein resides in the chloroplast thylakoid membrane. The catalysed reaction is a plastoquinone + NADH + (n+1) H(+)(in) = a plastoquinol + NAD(+) + n H(+)(out). It catalyses the reaction a plastoquinone + NADPH + (n+1) H(+)(in) = a plastoquinol + NADP(+) + n H(+)(out). NDH shuttles electrons from NAD(P)H:plastoquinone, via FMN and iron-sulfur (Fe-S) centers, to quinones in the photosynthetic chain and possibly in a chloroplast respiratory chain. The immediate electron acceptor for the enzyme in this species is believed to be plastoquinone. Couples the redox reaction to proton translocation, and thus conserves the redox energy in a proton gradient. The protein is NAD(P)H-quinone oxidoreductase subunit H, chloroplastic of Lactuca sativa (Garden lettuce).